The primary structure comprises 530 residues: Autoinducer-2 kinase (530 aa).

It belongs to the FGGY kinase family.

The protein resides in the cytoplasm. It carries out the reaction (S)-4,5-dihydroxypentane-2,3-dione + ATP = (2S)-2-hydroxy-3,4-dioxopentyl phosphate + ADP + H(+). Catalyzes the phosphorylation of autoinducer-2 (AI-2) to phospho-AI-2, which subsequently inactivates the transcriptional regulator LsrR and leads to the transcription of the lsr operon. Phosphorylates the ring-open form of (S)-4,5-dihydroxypentane-2,3-dione (DPD), which is the precursor to all AI-2 signaling molecules, at the C5 position. This chain is Autoinducer-2 kinase, found in Escherichia coli (strain K12 / DH10B).